We begin with the raw amino-acid sequence, 177 residues long: Nucleoside triphosphate/diphosphate phosphatase (177 aa).

Catalysis depends on arginine 23, which acts as the Proton donor. Asparagine 87, aspartate 103, aspartate 105, aspartate 107, aspartate 120, and glutamate 123 together coordinate Mg(2+).

This sequence belongs to the Ntdp family. Requires Mg(2+) as cofactor.

It catalyses the reaction a ribonucleoside 5'-triphosphate + H2O = a ribonucleoside 5'-diphosphate + phosphate + H(+). It carries out the reaction a ribonucleoside 5'-diphosphate + H2O = a ribonucleoside 5'-phosphate + phosphate + H(+). Functionally, has nucleoside phosphatase activity towards nucleoside triphosphates and nucleoside diphosphates. The polypeptide is Nucleoside triphosphate/diphosphate phosphatase (Streptococcus pyogenes serotype M1).